Reading from the N-terminus, the 341-residue chain is GTPase Obg (341 aa).

The Obg domain maps to 2–160 (SGFIDEVPIQ…FSLILELKLL (159 aa)). Residues 161–330 (ADIGIVGLPN…LLERIDKVFF (170 aa)) form the OBG-type G domain. GTP is bound by residues 167-174 (GLPNAGKS), 192-196 (FTTLS), 215-218 (DIPG), 282-285 (NKMD), and 311-313 (SAD). Positions 174 and 194 each coordinate Mg(2+).

Belongs to the TRAFAC class OBG-HflX-like GTPase superfamily. OBG GTPase family. As to quaternary structure, monomer. The cofactor is Mg(2+).

The protein resides in the cytoplasm. In terms of biological role, an essential GTPase which binds GTP, GDP and possibly (p)ppGpp with moderate affinity, with high nucleotide exchange rates and a fairly low GTP hydrolysis rate. Plays a role in control of the cell cycle, stress response, ribosome biogenesis and in those bacteria that undergo differentiation, in morphogenesis control. This chain is GTPase Obg, found in Leptospira biflexa serovar Patoc (strain Patoc 1 / Ames).